A 58-amino-acid polypeptide reads, in one-letter code: UPF0337 protein SAV_738 (58 aa).

A disordered region spans residues 1–58 (MAADEKAQANGEQAKGKVKKVVGGAAGNESLKGKGHAEESKGDLRAAKEKAKDAIKRK). The segment covering 31–58 (LKGKGHAEESKGDLRAAKEKAKDAIKRK) has biased composition (basic and acidic residues).

It belongs to the UPF0337 (CsbD) family.

The sequence is that of UPF0337 protein SAV_738 from Streptomyces avermitilis (strain ATCC 31267 / DSM 46492 / JCM 5070 / NBRC 14893 / NCIMB 12804 / NRRL 8165 / MA-4680).